The sequence spans 768 residues: 5-methyltetrahydropteroyltriglutamate--homocysteine methyltransferase (768 aa).

5-methyltetrahydropteroyltri-L-glutamate contacts are provided by residues 17–20 (RELK) and lysine 117. Residues 442–444 (IGS) and glutamate 495 contribute to the L-homocysteine site. Residues 442 to 444 (IGS) and glutamate 495 each bind L-methionine. Residues 526–527 (RC) and tryptophan 572 each bind 5-methyltetrahydropteroyltri-L-glutamate. An L-homocysteine-binding site is contributed by aspartate 610. An L-methionine-binding site is contributed by aspartate 610. Position 616 (glutamate 616) interacts with 5-methyltetrahydropteroyltri-L-glutamate. The Zn(2+) site is built by histidine 653, cysteine 655, and glutamate 677. Histidine 706 serves as the catalytic Proton donor. A Zn(2+)-binding site is contributed by cysteine 738.

Belongs to the vitamin-B12 independent methionine synthase family. Zn(2+) is required as a cofactor.

It carries out the reaction 5-methyltetrahydropteroyltri-L-glutamate + L-homocysteine = tetrahydropteroyltri-L-glutamate + L-methionine. The protein operates within amino-acid biosynthesis; L-methionine biosynthesis via de novo pathway; L-methionine from L-homocysteine (MetE route): step 1/1. Its function is as follows. Catalyzes the transfer of a methyl group from 5-methyltetrahydrofolate to homocysteine resulting in methionine formation. This Bifidobacterium adolescentis (strain ATCC 15703 / DSM 20083 / NCTC 11814 / E194a) protein is 5-methyltetrahydropteroyltriglutamate--homocysteine methyltransferase.